The following is a 2131-amino-acid chain: Protein Ycf2 (2131 aa).

ATP is bound at residue 1484–1491 (GSIGTGRS).

It belongs to the Ycf2 family.

The protein localises to the plastid. Its subcellular location is the chloroplast stroma. Probable ATPase of unknown function. Its presence in a non-photosynthetic plant (Epifagus virginiana) and experiments in tobacco indicate that it has an essential function which is probably not related to photosynthesis. In Spinacia oleracea (Spinach), this protein is Protein Ycf2 (ycf2-A).